A 239-amino-acid chain; its full sequence is MKFDPPLETVTLLRRYKRFMADVVRADGSEITVHCPNTGSMKNCVLGGPQQALISDSGNPKRKYRHTLEALQVAHGHWAGVNTARPNALVEEAVRAGQFPMLDSTSGVEREVKYGDSRFDLALGERADPHTFIEVKNVTLGPGPDDKDDGVIAFPDSVTERGQKHLQTLMDVVASGKRAVLFFCVQHSGATAARPADEIDARYGQLLREAIENGVEVLAWKSEVSAQCFRLKEPLPLDL.

Belongs to the SfsA family.

This Alcanivorax borkumensis (strain ATCC 700651 / DSM 11573 / NCIMB 13689 / SK2) protein is Sugar fermentation stimulation protein homolog.